Here is a 275-residue protein sequence, read N- to C-terminus: Small ribosomal subunit protein uS2 (275 aa).

The interval 226-275 is disordered; sequence AAAPNSASVREEEFSAEAGDEGKGRRAPAKKATEKKADAPAAAPEAPAAE. A compositionally biased stretch (low complexity) spans 264–275; that stretch reads APAAAPEAPAAE.

Belongs to the universal ribosomal protein uS2 family.

This is Small ribosomal subunit protein uS2 from Xanthomonas campestris pv. campestris (strain 8004).